The primary structure comprises 478 residues: 2-(3-amino-3-carboxypropyl)histidine synthase subunit 2 (478 aa).

Positions 93, 114, and 331 each coordinate [4Fe-4S] cluster.

It belongs to the DPH1/DPH2 family. DPH2 subfamily. Component of the 2-(3-amino-3-carboxypropyl)histidine synthase complex composed of dph1, dph2, dph3 and a NADH-dependent reductase. [4Fe-4S] cluster serves as cofactor.

It participates in protein modification; peptidyl-diphthamide biosynthesis. Its function is as follows. Required for the first step of diphthamide biosynthesis, a post-translational modification of histidine which occurs in elongation factor 2. Dph1 and dph2 transfer a 3-amino-3-carboxypropyl (ACP) group from S-adenosyl-L-methionine (SAM) to a histidine residue, the reaction is assisted by a reduction system comprising dph3 and a NADH-dependent reductase. Facilitates the reduction of the catalytic iron-sulfur cluster found in the dph1 subunit. This chain is 2-(3-amino-3-carboxypropyl)histidine synthase subunit 2 (dph2), found in Xenopus laevis (African clawed frog).